Consider the following 546-residue polypeptide: 2-isopropylmalate synthase (546 aa).

One can recognise a Pyruvate carboxyltransferase domain in the interval 8-271 (ILIFDTTLRD…NSFFGRSSDS (264 aa)). Mn(2+)-binding residues include Asp-17, His-208, His-210, and Asn-244. The interval 408-546 (QLSHVQVSCG…EKKVFSNPKN (139 aa)) is regulatory domain.

This sequence belongs to the alpha-IPM synthase/homocitrate synthase family. LeuA type 1 subfamily. Homodimer. Requires Mn(2+) as cofactor.

It is found in the cytoplasm. The catalysed reaction is 3-methyl-2-oxobutanoate + acetyl-CoA + H2O = (2S)-2-isopropylmalate + CoA + H(+). The protein operates within amino-acid biosynthesis; L-leucine biosynthesis; L-leucine from 3-methyl-2-oxobutanoate: step 1/4. Functionally, catalyzes the condensation of the acetyl group of acetyl-CoA with 3-methyl-2-oxobutanoate (2-ketoisovalerate) to form 3-carboxy-3-hydroxy-4-methylpentanoate (2-isopropylmalate). This chain is 2-isopropylmalate synthase, found in Prochlorococcus marinus (strain MIT 9515).